Here is a 448-residue protein sequence, read N- to C-terminus: Binary larvicide subunit BinB (448 aa).

The tract at residues 19–200 is beta-trefoil domain; sequence TNYPLNTTPT…FVNSSFYAAA (182 aa). Residues Cys-67 and Cys-161 are joined by a disulfide bond. Positions 226–407 are probable pore-forming domain; that stretch reads PKDAVRAVKG…APITNPLTLT (182 aa).

Belongs to the toxin_10 family. In terms of assembly, forms a heterodimer with BinA. In terms of processing, processed by proteases extracted from mosquito larval gut.

Its subcellular location is the spore. It localises to the perispore. In terms of biological role, component of a binary toxin active against Culex and some Aedes mosquito larvae. This subunit is responsible for localized binding to specific regions of the host larval gut. The individual subunits are not toxic. BinAB and this subunit alone bind to the gastric caecum and posterior midgut of C.quinquefasciatus larvae. Binary toxin internalization into host gut cells requires both proteins. Does not bind to the midgut of Aedes aegypti. Toxic to Aedes atropalpus mosquito larvae; mortality towards both C.quinquefasciatus and A.atropalpus is maximal by 48 hours. A.aegypti is not very susceptible to this toxin. Binding component of binary toxin. The 51 kDa polypeptide acts synergetically with the 42 kDa polypeptide for expression of a larvicidal toxin. The sequence is that of Binary larvicide subunit BinB from Lysinibacillus sphaericus (Bacillus sphaericus).